The following is a 42-amino-acid chain: Photosystem I reaction center subunit IX (42 aa).

Residues 7-27 (YLSAAPVLSTLWLGALAGLLI) traverse the membrane as a helical segment.

It belongs to the PsaJ family.

It is found in the plastid membrane. In terms of biological role, may help in the organization of the PsaE and PsaF subunits. The polypeptide is Photosystem I reaction center subunit IX (Cuscuta exaltata (Tall dodder)).